The following is a 305-amino-acid chain: NAD kinase (305 aa).

Aspartate 76 (proton acceptor) is an active-site residue. Residues 76–77 (DG), 150–151 (ND), arginine 161, and aspartate 180 each bind NAD(+).

Belongs to the NAD kinase family. A divalent metal cation serves as cofactor.

It localises to the cytoplasm. The enzyme catalyses NAD(+) + ATP = ADP + NADP(+) + H(+). In terms of biological role, involved in the regulation of the intracellular balance of NAD and NADP, and is a key enzyme in the biosynthesis of NADP. Catalyzes specifically the phosphorylation on 2'-hydroxyl of the adenosine moiety of NAD to yield NADP. This chain is NAD kinase, found in Treponema pallidum (strain Nichols).